The chain runs to 428 residues: Tyrosine--tRNA ligase (428 aa).

Tyr-34 contributes to the L-tyrosine binding site. The 'HIGH' region motif lies at 39–48 (PTADSLHIGH). L-tyrosine contacts are provided by Tyr-171 and Gln-175. Residues 236–240 (KFGKT) carry the 'KMSKS' region motif. Residue Lys-239 participates in ATP binding. In terms of domain architecture, S4 RNA-binding spans 358–424 (VGLIDLLVDA…GKKKYFLIQV (67 aa)).

It belongs to the class-I aminoacyl-tRNA synthetase family. TyrS type 1 subfamily. As to quaternary structure, homodimer.

It localises to the cytoplasm. It carries out the reaction tRNA(Tyr) + L-tyrosine + ATP = L-tyrosyl-tRNA(Tyr) + AMP + diphosphate + H(+). Its function is as follows. Catalyzes the attachment of tyrosine to tRNA(Tyr) in a two-step reaction: tyrosine is first activated by ATP to form Tyr-AMP and then transferred to the acceptor end of tRNA(Tyr). This Oceanobacillus iheyensis (strain DSM 14371 / CIP 107618 / JCM 11309 / KCTC 3954 / HTE831) protein is Tyrosine--tRNA ligase.